Consider the following 141-residue polypeptide: Small ribosomal subunit protein bS6 (141 aa).

The interval 96 to 141 (VTGQSEMLKAEENRSERRERRERPEHADSAEGDDSNDSDSSDNADE) is disordered. Basic and acidic residues predominate over residues 103–124 (LKAEENRSERRERRERPEHADS). The span at 125–141 (AEGDDSNDSDSSDNADE) shows a compositional bias: acidic residues.

It belongs to the bacterial ribosomal protein bS6 family.

Functionally, binds together with bS18 to 16S ribosomal RNA. The protein is Small ribosomal subunit protein bS6 of Pseudomonas putida (strain ATCC 700007 / DSM 6899 / JCM 31910 / BCRC 17059 / LMG 24140 / F1).